The primary structure comprises 37 residues: Esculentin-2SE (37 aa).

A disulfide bridge connects residues Cys-31 and Cys-37.

As to expression, expressed by the skin glands.

The protein resides in the secreted. In terms of biological role, mast cell degranulating peptide. Causes histamine release from rat peritoneal mast cells in vitro. Has antibacterial activity against the Gram-negative bacterium E.coli K12 and Gram-positive bacterium M.luteus NCT C2665. This Lithobates sevosus (Dusky gopher frog) protein is Esculentin-2SE.